A 166-amino-acid polypeptide reads, in one-letter code: MYIEMIDETGLVSQEIMEQTLDLLNFAARKTGKDEKEMSVTFVTNERSHELNLEYRDTDRPTDVISLEYKPESPILFDERDLEENPDLAEMLSEFDAYIGELFISIDKAKEQAQEYGHSFEREMGFLAVHGFLHINGYDHYTPEEEKEMFTLQEEILTAYGLTRQS.

Positions 130, 134, and 140 each coordinate Zn(2+).

This sequence belongs to the endoribonuclease YbeY family. The cofactor is Zn(2+).

The protein resides in the cytoplasm. Its function is as follows. Single strand-specific metallo-endoribonuclease involved in late-stage 70S ribosome quality control and in maturation of the 3' terminus of the 16S rRNA. The polypeptide is Endoribonuclease YbeY (Streptococcus uberis (strain ATCC BAA-854 / 0140J)).